Reading from the N-terminus, the 251-residue chain is Pyrroloquinoline-quinone synthase (251 aa).

It belongs to the PqqC family.

The enzyme catalyses 6-(2-amino-2-carboxyethyl)-7,8-dioxo-1,2,3,4,7,8-hexahydroquinoline-2,4-dicarboxylate + 3 O2 = pyrroloquinoline quinone + 2 H2O2 + 2 H2O + H(+). It functions in the pathway cofactor biosynthesis; pyrroloquinoline quinone biosynthesis. Functionally, ring cyclization and eight-electron oxidation of 3a-(2-amino-2-carboxyethyl)-4,5-dioxo-4,5,6,7,8,9-hexahydroquinoline-7,9-dicarboxylic-acid to PQQ. The sequence is that of Pyrroloquinoline-quinone synthase from Pseudomonas syringae pv. tomato (strain ATCC BAA-871 / DC3000).